We begin with the raw amino-acid sequence, 369 residues long: Protein-glutamate methylesterase/protein-glutamine glutaminase 1 (369 aa).

In terms of domain architecture, Response regulatory spans Lys-3–Asp-120. A 4-aspartylphosphate modification is found at Asp-54. Residues Arg-136–Ser-168 show a composition bias toward low complexity. The interval Arg-136–Val-174 is disordered. In terms of domain architecture, CheB-type methylesterase spans Gly-177–Lys-369. Catalysis depends on residues Ser-189, His-216, and Asp-312.

Belongs to the CheB family. In terms of processing, phosphorylated by CheA. Phosphorylation of the N-terminal regulatory domain activates the methylesterase activity.

Its subcellular location is the cytoplasm. It catalyses the reaction [protein]-L-glutamate 5-O-methyl ester + H2O = L-glutamyl-[protein] + methanol + H(+). It carries out the reaction L-glutaminyl-[protein] + H2O = L-glutamyl-[protein] + NH4(+). In terms of biological role, involved in chemotaxis. Part of a chemotaxis signal transduction system that modulates chemotaxis in response to various stimuli. Catalyzes the demethylation of specific methylglutamate residues introduced into the chemoreceptors (methyl-accepting chemotaxis proteins or MCP) by CheR. Also mediates the irreversible deamidation of specific glutamine residues to glutamic acid. In Oleidesulfovibrio alaskensis (strain ATCC BAA-1058 / DSM 17464 / G20) (Desulfovibrio alaskensis), this protein is Protein-glutamate methylesterase/protein-glutamine glutaminase 1.